The sequence spans 194 residues: A-type ATP synthase subunit E (194 aa).

It belongs to the V-ATPase E subunit family. In terms of assembly, has multiple subunits with at least A(3), B(3), C, D, E, F, H, I and proteolipid K(x).

Its subcellular location is the cell membrane. Its function is as follows. Component of the A-type ATP synthase that produces ATP from ADP in the presence of a proton gradient across the membrane. This is A-type ATP synthase subunit E from Saccharolobus islandicus (strain Y.N.15.51 / Yellowstone #2) (Sulfolobus islandicus).